The following is a 660-amino-acid chain: Potassium voltage-gated channel subfamily KQT member 1 (660 aa).

Residues 1 to 18 (MSSEVKSRWSGSGSQKSG) show a composition bias toward polar residues. Positions 1 to 67 (MSSEVKSRWS…PESRAADSRA (67 aa)) are disordered. The Cytoplasmic portion of the chain corresponds to 1-113 (MSSEVKSRWS…YNFLERPTGW (113 aa)). A compositionally biased stretch (basic and acidic residues) spans 53-67 (STDKNPESRAADSRA). A helical membrane pass occupies residues 114–135 (KCFIYHFTVFLIVLVCLIFSVM). Residues 136-146 (STIEQYHYFAN) lie on the Extracellular side of the membrane. A helical transmembrane segment spans residues 147 to 169 (RALVWMEIVLVVFFGTEYIVRLW). Residues 170–185 (SAGCRSKYVGFWGRLR) lie on the Cytoplasmic side of the membrane. Residues 186 to 211 (FARKPISIIDLIVVVASVIVLCVGSN) form a helical membrane-spanning segment. The Extracellular portion of the chain corresponds to 212-219 (GQVFATSA). The chain crosses the membrane as a helical; Voltage-sensor span at residues 220 to 235 (IRGIRFLQILRMLHVD). Residues 236 to 253 (RQGGTWRLLGSVVFIHRQ) are Cytoplasmic-facing. Position 237 (Gln237) interacts with a 1,2-diacyl-sn-glycero-3-phospho-(1D-myo-inositol-4,5-bisphosphate). Residues 254–276 (ELITTLYIGFLGLIFSSYFVYLA) traverse the membrane as a helical segment. Residues 277 to 292 (EKDAVDDSGSQQFGSY) are Extracellular-facing. The pore-forming intramembrane region spans 293–313 (ADALWWGVVTVTTIGYGDKVP). Topologically, residues 314–315 (QT) are extracellular. A helical transmembrane segment spans residues 316-341 (WIGRTIASCFSVFAISFFALPAGILG). The Cytoplasmic portion of the chain corresponds to 342 to 660 (SGFALKVQQK…RKDQDNQPDL (319 aa)). The disordered stretch occupies residues 399–426 (SPSPKTKKSVGKRKKLKTDKDNGLNSEK). The segment covering 403–415 (KTKKSVGKRKKLK) has biased composition (basic residues). Residues 579-615 (KNTIGARLNRVEEKFVHMDQKLNTITDMLHHLVAHQQ) are a coiled coil.

This sequence belongs to the potassium channel family. KQT (TC 1.A.1.15) subfamily. Kv7.1/KCNQ1 sub-subfamily. As to quaternary structure, tetramer. Heterotetramer with KCNE1; targets to the membrane raft. Interacts (via C-terminus) with CALM; forms a heterotetramer in a calcium-independent manner. Interacts with KCNE2; form a heterooligomer complex that targets to the membrane raft and leading to currents with an apparently instantaneous activation, a rapid deactivation process and a linear current-voltage relationship and decreases the amplitude of the outward current. Interacts with KCNE3; four KCNE3 molecules are bound to one KCNQ1 tetramer (4:4 KCNQ1:KCNE3 stoichiometry); alters membrane raft localization; affects KCNQ1 structure and gating properties. Interacts with KCNE4; impairs KCNQ1 localization in lipid rafts and inhibits voltage-gated potassium channel activity. Interacts with KCNE5; impairs KCNQ1 localization in lipid rafts and only conducts current upon strong and continued depolarization. Expressed only in rectal gland and heart. Faintly expressed in intestine. Undetectable in kidney, brain, testis, liver and gills.

The protein resides in the cell membrane. The protein localises to the cytoplasmic vesicle membrane. Its subcellular location is the membrane raft. It localises to the endoplasmic reticulum. It is found in the basolateral cell membrane. It catalyses the reaction K(+)(in) = K(+)(out). PIP2 molecule is essential to activate KCNQ channels by inducing the coupling of the voltage-sensing domain (VSD) and the pore-forming domain (PD). Upon channel activation, PIP2 disrupts the VSD-calmodulin/CALM interactions, causing the release of CALM from the VSD which triggers the opening of the gate. Calcium potentiates KCNQ1 channel current through calcium-bound CALM. Calcium-bound CALM competes with PIP2 to stabilize the channel open state. Pore-forming subunit of the voltage-gated potassium (Kv) channel involved in the regulation of cardiomyocyte excitability and important in normal development and functions of myocardium, inner ear, stomach and colon. Associates with KCNE beta subunits that modulates current kinetics. Induces a voltage-dependent by rapidly activating and slowly deactivating potassium-selective outward current. Also promotes a delayed voltage activated potassium current showing outward rectification characteristic. During beta-adrenergic receptor stimulation participates in cardiac repolarization by associating with KCNE1 to form the I(Ks) cardiac potassium current that increases the amplitude and slows down the activation kinetics of outward potassium current I(Ks). When associated with KCNE3, forms the potassium channel that is important for cyclic AMP-stimulated intestinal secretion of chloride ions. When associated with KCNE2, forms a heterooligomer complex leading to currents with an apparently instantaneous activation, a rapid deactivation process and a linear current-voltage relationship and decreases the amplitude of the outward current. When associated with KCNE4, inhibits voltage-gated potassium channel activity. When associated with KCNE5, this complex only conducts current upon strong and continued depolarization. This chain is Potassium voltage-gated channel subfamily KQT member 1, found in Squalus acanthias (Spiny dogfish).